Reading from the N-terminus, the 360-residue chain is Peptide chain release factor 1 (360 aa).

An N5-methylglutamine modification is found at Gln-235. The disordered stretch occupies residues 284–312 (ERQAQAQADTRRNLLGSGDRSDKIRTYNY).

It belongs to the prokaryotic/mitochondrial release factor family. In terms of processing, methylated by PrmC. Methylation increases the termination efficiency of RF1.

It localises to the cytoplasm. Its function is as follows. Peptide chain release factor 1 directs the termination of translation in response to the peptide chain termination codons UAG and UAA. This chain is Peptide chain release factor 1, found in Histophilus somni (strain 129Pt) (Haemophilus somnus).